The chain runs to 483 residues: tRNA sulfurtransferase (483 aa).

A THUMP domain is found at 61–165; the sequence is PLVADALTLI…NDRLLLITER (105 aa). Residues 183-184, Lys-265, Gly-287, and Gln-296 each bind ATP; that span reads LI. An intrachain disulfide couples Cys-344 to Cys-457. Residues 405–483 form the Rhodanese domain; the sequence is LGSGDVVLDI…GFQNVKVYRP (79 aa). The active-site Cysteine persulfide intermediate is Cys-457.

The protein belongs to the ThiI family.

Its subcellular location is the cytoplasm. The enzyme catalyses [ThiI sulfur-carrier protein]-S-sulfanyl-L-cysteine + a uridine in tRNA + 2 reduced [2Fe-2S]-[ferredoxin] + ATP + H(+) = [ThiI sulfur-carrier protein]-L-cysteine + a 4-thiouridine in tRNA + 2 oxidized [2Fe-2S]-[ferredoxin] + AMP + diphosphate. The catalysed reaction is [ThiS sulfur-carrier protein]-C-terminal Gly-Gly-AMP + S-sulfanyl-L-cysteinyl-[cysteine desulfurase] + AH2 = [ThiS sulfur-carrier protein]-C-terminal-Gly-aminoethanethioate + L-cysteinyl-[cysteine desulfurase] + A + AMP + 2 H(+). The protein operates within cofactor biosynthesis; thiamine diphosphate biosynthesis. Functionally, catalyzes the ATP-dependent transfer of a sulfur to tRNA to produce 4-thiouridine in position 8 of tRNAs, which functions as a near-UV photosensor. Also catalyzes the transfer of sulfur to the sulfur carrier protein ThiS, forming ThiS-thiocarboxylate. This is a step in the synthesis of thiazole, in the thiamine biosynthesis pathway. The sulfur is donated as persulfide by IscS. This is tRNA sulfurtransferase from Sodalis glossinidius (strain morsitans).